We begin with the raw amino-acid sequence, 184 residues long: Chaperone protein YcdY (184 aa).

The protein belongs to the TorD/DmsD family. In terms of assembly, interacts with YcdX.

Functionally, acts as a chaperone that increases YcdX activity, maybe by facilitating the correct insertion of the zinc ions into the catalytic site of YcdX. Involved in the swarming motility process. The polypeptide is Chaperone protein YcdY (ycdY) (Escherichia coli (strain K12)).